The chain runs to 254 residues: Ribosomal RNA small subunit methyltransferase G (254 aa).

S-adenosyl-L-methionine is bound by residues Gly92, 143 to 144, and Arg156; that span reads AE.

It belongs to the methyltransferase superfamily. RNA methyltransferase RsmG family.

It is found in the cytoplasm. Functionally, specifically methylates the N7 position of a guanine in 16S rRNA. This chain is Ribosomal RNA small subunit methyltransferase G, found in Leptospira interrogans serogroup Icterohaemorrhagiae serovar copenhageni (strain Fiocruz L1-130).